The primary structure comprises 137 residues: Small ribosomal subunit protein uS11 (137 aa).

Over residues M1–P10 the composition is skewed to polar residues. 2 disordered regions span residues M1–G27 and G116–V137. Over residues K12–K21 the composition is skewed to basic residues.

It belongs to the universal ribosomal protein uS11 family. Part of the 30S ribosomal subunit. Interacts with proteins S7 and S18. Binds to IF-3.

Functionally, located on the platform of the 30S subunit, it bridges several disparate RNA helices of the 16S rRNA. Forms part of the Shine-Dalgarno cleft in the 70S ribosome. The protein is Small ribosomal subunit protein uS11 of Rhodococcus erythropolis (strain PR4 / NBRC 100887).